Reading from the N-terminus, the 732-residue chain is DNA gyrase subunit B, mitochondrial (732 aa).

In terms of domain architecture, Toprim spans 513 to 620 (SEIFIVEGDS…RYQRALFDAG (108 aa)). Mg(2+) is bound by residues Glu519, Asp593, and Asp595.

The protein belongs to the type II topoisomerase GyrB family. In terms of assembly, made up of two chains. The A chain is responsible for DNA breakage and rejoining; the B chain catalyzes ATP hydrolysis. It depends on Mg(2+) as a cofactor. The cofactor is Mn(2+). Requires Ca(2+) as cofactor.

It localises to the mitochondrion. It catalyses the reaction ATP-dependent breakage, passage and rejoining of double-stranded DNA.. In terms of biological role, a type II topoisomerase that negatively supercoils closed circular double-stranded DNA in an ATP-dependent manner. This Arabidopsis thaliana (Mouse-ear cress) protein is DNA gyrase subunit B, mitochondrial (GYRBM).